The following is a 258-amino-acid chain: Indole-3-glycerol phosphate synthase (258 aa).

Belongs to the TrpC family.

The enzyme catalyses 1-(2-carboxyphenylamino)-1-deoxy-D-ribulose 5-phosphate + H(+) = (1S,2R)-1-C-(indol-3-yl)glycerol 3-phosphate + CO2 + H2O. It functions in the pathway amino-acid biosynthesis; L-tryptophan biosynthesis; L-tryptophan from chorismate: step 4/5. This is Indole-3-glycerol phosphate synthase from Geobacillus sp. (strain WCH70).